The following is a 654-amino-acid chain: Tetratricopeptide repeat protein 30 homolog (654 aa).

7 TPR repeats span residues 10–43 (DGEY…STTR), 44–76 (AGLS…VPDV), 145–178 (ASTK…GGFN), 180–212 (HVAY…GIRN), 393–426 (CRSA…RAWI), 452–485 (SWRL…NYDD), and 535–568 (CIVN…GSGA).

The protein belongs to the TTC30/dfy-1/fleer family.

It is found in the cell projection. The protein localises to the cilium. Required for polyglutamylation of axonemal tubulin in sensory cilia. Plays a role in anterograde intraflagellar transport (IFT), the process by which cilia precursors are transported from the base of the cilium to the site of their incorporation at the tip. This Anopheles gambiae (African malaria mosquito) protein is Tetratricopeptide repeat protein 30 homolog.